The following is a 446-amino-acid chain: Probable 1,4-beta-D-glucan cellobiohydrolase A (446 aa).

Residues 1 to 17 form the signal peptide; it reads MYQRALLFSALLSVSRA. The N-linked (GlcNAc...) asparagine glycan is linked to asparagine 81. Glutamate 226 serves as the catalytic Nucleophile. The active-site Proton donor is glutamate 231. 2 N-linked (GlcNAc...) asparagine glycosylation sites follow: asparagine 284 and asparagine 333. The interval 399-420 is disordered; it reads TDADPSQPGVARGTCEQGAGDP.

It belongs to the glycosyl hydrolase 7 (cellulase C) family.

Its subcellular location is the secreted. The enzyme catalyses Hydrolysis of (1-&gt;4)-beta-D-glucosidic linkages in cellulose and cellotetraose, releasing cellobiose from the non-reducing ends of the chains.. Its function is as follows. The biological conversion of cellulose to glucose generally requires three types of hydrolytic enzymes: (1) Endoglucanases which cut internal beta-1,4-glucosidic bonds; (2) Exocellobiohydrolases that cut the disaccharide cellobiose from the non-reducing end of the cellulose polymer chain; (3) Beta-1,4-glucosidases which hydrolyze the cellobiose and other short cello-oligosaccharides to glucose. The protein is Probable 1,4-beta-D-glucan cellobiohydrolase A (cbhA) of Emericella nidulans (strain FGSC A4 / ATCC 38163 / CBS 112.46 / NRRL 194 / M139) (Aspergillus nidulans).